A 249-amino-acid polypeptide reads, in one-letter code: Receptor-transporting protein 4 (249 aa).

Topologically, residues 1 to 227 are cytoplasmic; the sequence is MLFPDDFSTW…QGCREPPQRE (227 aa). Residues 50–162 form a 3CxxC-type zinc finger; that stretch reads TVLGRFQCSR…DTRNCEACSL (113 aa). The disordered stretch occupies residues 173–208; it reads KVKPPRSPSPLPKSSSPSKSCPPPPQTRNTDFGNKT. Residues 199 to 208 are compositionally biased toward polar residues; that stretch reads TRNTDFGNKT. Residues 228–248 form a helical membrane-spanning segment; sequence IEPPLFLFLSIAAFALFSLFT.

The protein belongs to the TMEM7 family. As to quaternary structure, interacts with TASR16. Interacts with OPRD1 and OPRM1; the interaction promotes cell surface localization of the OPDR1-OPRM1 heterodimer. In terms of tissue distribution, expressed at low levels in olfactory neurons. Upon viral infection, highly expressed in brain and different cells of nervous tissue.

It is found in the membrane. Its subcellular location is the cytoplasm. In terms of biological role, chaperone protein that facilitates the trafficking and functional cell surface expression of some G-protein coupled receptors (GPCRs). Promotes functional expression of the bitter taste receptor TAS2R16. Also promotes functional expression of the opioid receptor heterodimer OPRD1-OPRM1. In addition, acts as a potent IFN-inducible suppressor of pathogens including lyssavirus rabies, influenza A or yellow fever virus. Mechanistically, associates with the viral replicase, binds viral RNA, and thereby suppresses viral genome amplification that replicates at the endoplasmic reticulum. In addition, restores antiviral signaling by interacting with and sequestering influenza virus protein NS1. The polypeptide is Receptor-transporting protein 4 (Rtp4) (Mus musculus (Mouse)).